Reading from the N-terminus, the 839-residue chain is Genome polyprotein (839 aa).

Over residues 55–66 (TAEVGSHQSEPL) the composition is skewed to polar residues. A disordered region spans residues 55 to 76 (TAEVGSHQSEPLKTSVDKPGSK). 2 short sequence motifs ((L)YPX(n)L motif) span residues 167–171 (YPHGL) and 200–205 (YPVWEL). Polar residues predominate over residues 496-510 (SGGFSTTVSTEQNVP). 2 disordered regions span residues 496-530 (SGGF…NKGK) and 773-792 (GDLE…RFES). The tract at residues 766–836 (MLDRIAGGDL…RKLKGLFSQS (71 aa)) is involved in P1-2A pentamerization. The segment covering 780-792 (DDPRTDEDRRFES) has biased composition (basic and acidic residues).

The protein belongs to the picornaviridae polyprotein family. Homodimer. Homomultimer; probably interacts with membranes in a multimeric form. Seems to assemble into amyloid-like fibers. As to quaternary structure, homopentamer. Homooligomer. In terms of assembly, interacts with capsid protein VP2. Interacts with capsid protein VP3. Interacts with capsid protein VP1. Interacts with capsid protein VP3. As to quaternary structure, interacts with capsid protein VP1. Interacts with capsid protein VP2. In terms of processing, specific enzymatic cleavages by viral protease in vivo yield a variety of precursors and mature proteins. Polyprotein processing intermediates are produced, such as P1-2A which is a functional precursor of the structural proteins, VP0 which is a VP4-VP2 precursor, VP1-2A precursor, 3ABC precursor which is a stable and catalytically active precursor of 3A, 3B and 3C proteins, 3AB and 3CD precursors. The assembly signal 2A is removed from VP1-2A by a host protease, possibly host Cathepsin L. This cleavage occurs over a region of 3 amino-acids probably generating VP1 proteins with heterogeneous C-termini. During virion maturation, immature virions are rendered infectious following cleavage of VP0 into VP4 and VP2. This maturation seems to be an autocatalytic event triggered by the presence of RNA in the capsid and is followed by a conformational change of the particle. Post-translationally, the assembly signal 2A is removed from VP1-2A by a host protease, possibly host Cathepsin L in naked virions. This cleavage does not occur in enveloped virions. This cleavage occurs over a region of 3 amino-acids probably generating VP1 proteins with heterogeneous C-termini. In terms of processing, unlike other picornaviruses, does not seem to be myristoylated.

The protein localises to the virion. It is found in the host endosome. Its subcellular location is the host multivesicular body. It localises to the host membrane. Its function is as follows. Capsid proteins VP1, VP2, and VP3 form a closed capsid enclosing the viral positive strand RNA genome. All these proteins contain a beta-sheet structure called beta-barrel jelly roll. Together they form an icosahedral capsid (T=3) composed of 60 copies of each VP1, VP2, and VP3, with a diameter of approximately 300 Angstroms. VP1 is situated at the 12 fivefold axes, whereas VP2 and VP3 are located at the quasi-sixfold axes. The naked capsid interacts with the host receptor HAVCR1 to provide virion attachment to and probably entry into the target cell. In terms of biological role, VP0 precursor is a component of the immature procapsids. Functionally, plays a role in the assembly of the 12 pentamers into an icosahedral structure. Has not been detected in mature virions, supposedly owing to its small size. Precursor component of immature procapsids that corresponds to an extended form of the structural protein VP1. After maturation, possibly by the host Cathepsin L, the assembly signal 2A is cleaved to give rise to the mature VP1 protein. Its function is as follows. Affects membrane integrity and causes an increase in membrane permeability. In terms of biological role, functions as a viroporin. Affects membrane integrity and causes an increase in membrane permeability. Involved in host intracellular membrane rearrangements probably to give rise to the viral factories. Does not disrupt calcium homeostasis or glycoprotein trafficking. Antagonizes the innate immune response of the host by suppressing IFN-beta synthesis, which it achieves by interfering with the RIG-I/IFIH1 pathway. This is Genome polyprotein from Callithrix (Owl-faced monkey).